The sequence spans 87 residues: U15-lycotoxin-Ls1f (87 aa).

An N-terminal signal peptide occupies residues 1 to 20; it reads MNSKIFAVLLLLGLLSCVLS. Residues 21 to 66 enclose the WAP domain; that stretch reads DQYCPKSSITACKKMNIRNDCCKDDDCTGGSWCCATPCGNFCKYPT. Cystine bridges form between Cys-24-Cys-54, Cys-32-Cys-58, Cys-41-Cys-53, Cys-42-Cys-80, and Cys-47-Cys-62.

The protein belongs to the venom protein 11 family. 01 (wap-1) subfamily. Post-translationally, contains 5 disulfide bonds. As to expression, expressed by the venom gland.

Its subcellular location is the secreted. Functionally, has antibacterial activity. The sequence is that of U15-lycotoxin-Ls1f from Lycosa singoriensis (Wolf spider).